Here is a 122-residue protein sequence, read N- to C-terminus: Large ribosomal subunit protein uL14 (122 aa).

The protein belongs to the universal ribosomal protein uL14 family. Part of the 50S ribosomal subunit. Forms a cluster with proteins L3 and L19. In the 70S ribosome, L14 and L19 interact and together make contacts with the 16S rRNA in bridges B5 and B8.

Binds to 23S rRNA. Forms part of two intersubunit bridges in the 70S ribosome. The polypeptide is Large ribosomal subunit protein uL14 (Mycoplasmopsis agalactiae (strain NCTC 10123 / CIP 59.7 / PG2) (Mycoplasma agalactiae)).